Consider the following 66-residue polypeptide: Large ribosomal subunit protein bL35 (66 aa).

The segment covering 1–28 has biased composition (basic residues); it reads MPKMKTHRGSAKRFKRTGSGKLKRRHGF. Residues 1-50 are disordered; the sequence is MPKMKTHRGSAKRFKRTGSGKLKRRHGFTSHMFANKSQKQKRKLRKSAMV.

The protein belongs to the bacterial ribosomal protein bL35 family.

The protein is Large ribosomal subunit protein bL35 of Listeria monocytogenes serotype 4a (strain HCC23).